Here is a 370-residue protein sequence, read N- to C-terminus: Neutral protease 2 homolog AFUA_4G13750 (370 aa).

Residues 1-19 form the signal peptide; it reads MKVTILASAILALINGALA. Residues 20-172 constitute a propeptide that is removed on maturation; that stretch reads LPANTPTLDV…PQAIKLLDRR (153 aa). 2 cysteine pairs are disulfide-bonded: C178-C250 and C257-C275. H300 is a Zn(2+) binding site. E301 is an active-site residue. Zn(2+) is bound by residues H304 and D315.

The protein belongs to the peptidase M35 family. Zn(2+) serves as cofactor.

The protein resides in the secreted. The catalysed reaction is Preferential cleavage of bonds with hydrophobic residues in P1'. Also 3-Asn-|-Gln-4 and 8-Gly-|-Ser-9 bonds in insulin B chain.. Its function is as follows. Secreted metalloproteinase that allows assimilation of proteinaceous substrates. Shows high activities on basic nuclear substrates such as histone and protamine. May be involved in virulence. The protein is Neutral protease 2 homolog AFUA_4G13750 of Aspergillus fumigatus (strain ATCC MYA-4609 / CBS 101355 / FGSC A1100 / Af293) (Neosartorya fumigata).